Here is a 392-residue protein sequence, read N- to C-terminus: 8-amino-7-oxononanoate synthase (392 aa).

Arginine 18 provides a ligand contact to substrate. Position 105–106 (glycine 105–tyrosine 106) interacts with pyridoxal 5'-phosphate. Residue histidine 130 coordinates substrate. Residues serine 177, histidine 205, and threonine 234 each contribute to the pyridoxal 5'-phosphate site. Lysine 237 is modified (N6-(pyridoxal phosphate)lysine). Residue threonine 351 participates in substrate binding.

The protein belongs to the class-II pyridoxal-phosphate-dependent aminotransferase family. BioF subfamily. Homodimer. It depends on pyridoxal 5'-phosphate as a cofactor.

The catalysed reaction is 6-carboxyhexanoyl-[ACP] + L-alanine + H(+) = (8S)-8-amino-7-oxononanoate + holo-[ACP] + CO2. Its pathway is cofactor biosynthesis; biotin biosynthesis. Catalyzes the decarboxylative condensation of pimeloyl-[acyl-carrier protein] and L-alanine to produce 8-amino-7-oxononanoate (AON), [acyl-carrier protein], and carbon dioxide. The protein is 8-amino-7-oxononanoate synthase of Thioalkalivibrio sulfidiphilus (strain HL-EbGR7).